The sequence spans 975 residues: Cation-chloride cotransporter 1 (975 aa).

2 disordered regions span residues 1–29 (MDSGDIEEAGGNGEEEFRSGPRLGGSKYR) and 104–124 (EQIQAPSSPRDGEDISITQGH). Residues 1 to 132 (MDSGDIEEAG…GHPKPPALKM (132 aa)) lie on the Cytoplasmic side of the membrane. The helical transmembrane segment at 133-153 (GTMMGVFVPCLQNILGIIYYI) threads the bilayer. Topologically, residues 154–167 (RFTWIVGMAGIGQG) are extracellular. The chain crosses the membrane as a helical span at residues 168–188 (LVLVFLCGLCTFLTTISLSAI). Over 189–214 (ATNGAMKGGGPYYLIGRALGPEVGIS) the chain is Cytoplasmic. The chain crosses the membrane as a helical span at residues 215–235 (IGLCFFLGNAVAGALYVLGAV). At 236 to 273 (ETFLKAFPAAGIFRETITKVNGTAVSESIQSPNSHDLQ) the chain is on the extracellular side. The N-linked (GlcNAc...) asparagine glycan is linked to N256. Residues 274–294 (VYGIVVTILLCFIVFGGVKMI) form a helical membrane-spanning segment. Over 295–296 (NR) the chain is Cytoplasmic. A helical transmembrane segment spans residues 297–317 (VAPAFLVPVLLSIFCIFIGIF). Residues 318–359 (LAKTDDPDNGITGLRLKSFKDNWGSAYQMTNDAGIPDPTGGT) are Extracellular-facing. A helical membrane pass occupies residues 360-380 (YWSFNELVGLFFPAVTGIMAG). Over 381–398 (SNRSASLKDTQKSIPVGT) the chain is Cytoplasmic. The chain crosses the membrane as a helical span at residues 399-419 (LAATLTTTSLYLISVLFFGAV). The Extracellular segment spans residues 420–434 (ATRDKLLTDRLLTAT). Residues 435 to 455 (IAWPFPAIVHVGIILSTLGAA) traverse the membrane as a helical segment. Residues 456-490 (LQSLTGAPRLLAAIANDDILPILNYFKVADTSEPH) are Cytoplasmic-facing. The helical transmembrane segment at 491-511 (IATLFTAFICIGCVVIGNLDL) threads the bilayer. Over 512–515 (ITPT) the chain is Extracellular. Residues 516 to 536 (VTMFYLLCYSGVNLSCFLLDL) traverse the membrane as a helical segment. Over 537–544 (LDAPSWRP) the chain is Cytoplasmic. Residues 545–565 (RWKYHHWSLSFVGASLCIVIM) form a helical membrane-spanning segment. At 566–571 (FLISWS) the chain is on the extracellular side. A helical transmembrane segment spans residues 572–592 (FTVVAIALASLIYKYVGLKGK). At 593–975 (AGDWGDGFKS…YHRDVVTLFT (383 aa)) the chain is on the cytoplasmic side.

Belongs to the SLC12A transporter family. Expressed in young seedlings cotyledon tips, plant vasculature, root tips and axillary buds. Expressed in root vascular strand in the pericycle and other parenchyma cells bordering xylem vessels. Expressed in the xylem/symplast boundaries of rosette stems, rosette leaves and cauline leaves. Expressed in stipules, trichomes and hydathodes. Expressed in pollen grains.

The protein resides in the membrane. Functionally, cation/chloride cotransporter that mediates potassium-chloride and sodium-chloride cotransports. Involved in plant development and Cl(-) homeostasis. May be involved in long distance Cl(-) transport. Does not function as an H(+)-dependent cotransporter. The polypeptide is Cation-chloride cotransporter 1 (CCC1) (Arabidopsis thaliana (Mouse-ear cress)).